We begin with the raw amino-acid sequence, 158 residues long: MQAIPMTLRGAEKLREELDFLKSVRRPEIIAAIAEAREHGDLKENAEYHAAREQQGFCEGRIKDIEAKLSNAQVIDVTKMPNNGRVIFGATVTVLNLDTDEEQTYRIVGDDEADFKQNLISVNSPIARGLIGKEQDDVVVIKTPGGDVEYEVLKVEYL.

Belongs to the GreA/GreB family.

Necessary for efficient RNA polymerase transcription elongation past template-encoded arresting sites. The arresting sites in DNA have the property of trapping a certain fraction of elongating RNA polymerases that pass through, resulting in locked ternary complexes. Cleavage of the nascent transcript by cleavage factors such as GreA or GreB allows the resumption of elongation from the new 3'terminus. GreA releases sequences of 2 to 3 nucleotides. The sequence is that of Transcription elongation factor GreA from Salmonella typhi.